A 439-amino-acid polypeptide reads, in one-letter code: Xylose isomerase (439 aa).

Active-site residues include His-101 and Asp-104. Mg(2+) contacts are provided by Glu-232, Glu-268, His-271, Asp-296, Asp-307, Asp-309, and Asp-339.

The protein belongs to the xylose isomerase family. Homotetramer. Requires Mg(2+) as cofactor.

It localises to the cytoplasm. The catalysed reaction is alpha-D-xylose = alpha-D-xylulofuranose. The polypeptide is Xylose isomerase (Haemophilus influenzae (strain PittEE)).